The sequence spans 263 residues: HTH-type transcriptional repressor NanR (263 aa).

One can recognise an HTH gntR-type domain in the interval 30-98 (KKLSEMVEEE…NGERARVSRP (69 aa)). Residues 58–77 (ERELMAFFNVGRPSVREALA) constitute a DNA-binding region (H-T-H motif).

The protein belongs to the NanR family.

Transcriptional repressor that controls expression of the genes required for the catabolism of sialic acids. In Salmonella arizonae (strain ATCC BAA-731 / CDC346-86 / RSK2980), this protein is HTH-type transcriptional repressor NanR.